A 708-amino-acid polypeptide reads, in one-letter code: Transcriptional regulator nsrM (708 aa).

Residues 37–63 constitute a DNA-binding region (zn(2)-C6 fungal-type); that stretch reads CVRCQQRKVRCDHKSPCGNCVASDSQC.

It localises to the nucleus. Functionally, transcriptional regulator; part of the gene cluster that mediates the biosynthesis of the tetrahydroxanthone dimer neosartorin, which exhibits antibacterial activity. The polypeptide is Transcriptional regulator nsrM (Aspergillus novofumigatus (strain IBT 16806)).